The primary structure comprises 1528 residues: MLQKCKLEGIIICNEKRLLGAAKVKSGRTLSGALLGTAILASGAGQKALAEETSTTSTSGGDTAVVGTETGNPATNLPDKQDNPSSQAETSQAQARQKTGAMSVDVSTSELDEAAKSPQEAGVTVSQDATVNKGTVEPSDEANQKEPEIKDDYSKQAADIQKATEDYKASVAANQAETDRINQEIAAKKAQYEQDLAANKAEVERSLMRMRKPRPIYEAKLAQNQKDLAAIQQANSDSQAAYAAAKEAYDKEWARVQAANAAAKKAYEEALAANTAKNDQIKAEIEAIQQRSAKADYEAKLAQYEKDLAAAQAGNAANEADYQAKKAAYEQELARVQAANAAAKQAYEQALAANSAKNAQITAENEAIQQNAQAKADYEAKLAQYQKDLAAAQSGNAANEADYQEKLAAYEKELARVQAANAAAKQAYEQQVQQANAKNAEITEANRAIRERNAKAKTDYELKLSKYQEELAQYKKDLAEYPAKLQAYQDEQAAIKAALAELEKHKNEDGNLSEPSAQSLVYDLEPNAQVALVTDGKLLKASALDEAFSHDEKNYNNHLLQPDNLNVTYLEQADDVASSVELFGNFGDKAGWTTTVSNGAEVKFASVLLKRGQSATATYTNLKNSYYNGKKISKVVYKYTVDPDSKFQNPTGNVWLGIFTDPTLGVFASAYTGQNEKDTSIFIKNEFTFYDEDGNPIDFDNALLSVASLNREHNSIEMAKDYSGTFVKISGSSIGEKNGMIYATDTLNFKKGEGGSLHTMYTRASEPGSGWDSADAPNSWYGAGAVRMSGPNNYITLGATSATNVLSLAEMPQVPGKDNTAGKKPNIWYSLNGKIRAVNVPKVTKEKPTPPVEPTKPDEPTYEVEKELVDLPVEPKYEPEPTPPSKNPDQSIPEKPVEPTYEVEKELEPAPVEPSYEKEPTPPQSTPDQEEPEKPVEPSYQSLPTPPVEPVYETVPGPVSVPTVRYHYYKLAVQPGVTKEIKNQDDLDIDKTLVAKQSTVKFQLKTADLPAGRPETTSFVLMDPLPSGYQLNLEATKVASPGFEASYDAMTHTVTFTATAETLAALNQDLTKAVATIYPTVVGQVLNDGATYTNNFTLMVNDAYGIKSNIVRVTTPGKPNDPDNPSNNYITPHKVNKNENGVVIDGKSVLAGTTNYYELTWDLDQYKGDKSAKEIIQKGFFYVDDYPEEALDLRTDLIKLTDANGKAVTGVSVADYASLEAAPAAVQDMLKKANIIPKGAFQVFTADDPQAFYDAYVVTGTDLTIVTPMTVKAEMGKTGGSYENRAYQIDFGNGYESNLVVNNVPKINPEKDVTLTMDPADSTNVDGQTIALNQVFNYRLIGGIIPADHAEELFEYSFSDDYDQTGDQYTGQYKAFAKVDLTLKDGTIIKAGTDLTSYTEAQVDEANGQIVVTFKEDFLRSVSVDSAFQAEVYLQMKRIAVGTFANTYVNTVNGITYSSNTVRTSTPEPKQPSPVDPKTTTTVVFQPRQGKAYQPAPPAGAQLPATGDSSNAYLPLLGLVSLTAGFSC.

Residues 1–50 form the signal peptide; sequence MLQKCKLEGIIICNEKRLLGAAKVKSGRTLSGALLGTAILASGAGQKALA. Positions 50–156 are disordered; the sequence is AEETSTTSTS…PEIKDDYSKQ (107 aa). Low complexity predominate over residues 51–68; it reads EETSTTSTSGGDTAVVGT. 2 stretches are compositionally biased toward polar residues: residues 83-97 and 124-133; these read NPSS…QARQ and TVSQDATVNK. Residues 142–154 are compositionally biased toward basic and acidic residues; the sequence is ANQKEPEIKDDYS. Ag I/II A repeat units follow at residues 161-235, 236-315, 316-396, and 397-478; these read QKAT…QQAN, SDSQ…QAGN, AANE…QSGN, and AANE…KKDL. 2 disordered regions span residues 840 to 951 and 1459 to 1480; these read VPKV…VEPV and SNTV…PKTT. Positions 855–879 are enriched in basic and acidic residues; the sequence is TKPDEPTYEVEKELVDLPVEPKYEP. Over residues 1459–1468 the composition is skewed to polar residues; the sequence is SNTVRTSTPE. Positions 1503–1507 match the LPXTG sorting signal motif; that stretch reads LPATG. T1506 bears the Pentaglycyl murein peptidoglycan amidated threonine mark. Positions 1507 to 1528 are cleaved as a propeptide — removed by sortase; sequence GDSSNAYLPLLGLVSLTAGFSC.

The protein belongs to the antigen I/II family.

It localises to the secreted. It is found in the cell wall. This is Cell surface antigen I/II from Streptococcus downei (Streptococcus sobrinus).